We begin with the raw amino-acid sequence, 279 residues long: Bifunctional protein FolD (279 aa).

NADP(+)-binding positions include 159–161, Ser-184, and Thr-225; that span reads GRS.

It belongs to the tetrahydrofolate dehydrogenase/cyclohydrolase family. As to quaternary structure, homodimer.

It catalyses the reaction (6R)-5,10-methylene-5,6,7,8-tetrahydrofolate + NADP(+) = (6R)-5,10-methenyltetrahydrofolate + NADPH. The enzyme catalyses (6R)-5,10-methenyltetrahydrofolate + H2O = (6R)-10-formyltetrahydrofolate + H(+). It participates in one-carbon metabolism; tetrahydrofolate interconversion. Functionally, catalyzes the oxidation of 5,10-methylenetetrahydrofolate to 5,10-methenyltetrahydrofolate and then the hydrolysis of 5,10-methenyltetrahydrofolate to 10-formyltetrahydrofolate. This chain is Bifunctional protein FolD, found in Methanospirillum hungatei JF-1 (strain ATCC 27890 / DSM 864 / NBRC 100397 / JF-1).